We begin with the raw amino-acid sequence, 509 residues long: Maturase K (509 aa).

The protein belongs to the intron maturase 2 family. MatK subfamily.

The protein resides in the plastid. Its subcellular location is the chloroplast. Functionally, usually encoded in the trnK tRNA gene intron. Probably assists in splicing its own and other chloroplast group II introns. This chain is Maturase K, found in Nicotiana tomentosiformis (Tobacco).